Here is a 143-residue protein sequence, read N- to C-terminus: UPF0292 protein Mbar_A0484 (143 aa).

Positions 28–109 (GAIIIVEGKR…KPELEIRNKL (82 aa)) constitute a Toprim domain. Residues glutamate 34, aspartate 78, and aspartate 80 each contribute to the Mg(2+) site.

This sequence belongs to the UPF0292 family. Mg(2+) is required as a cofactor.

The protein is UPF0292 protein Mbar_A0484 of Methanosarcina barkeri (strain Fusaro / DSM 804).